Reading from the N-terminus, the 256-residue chain is Ribosomal RNA small subunit methyltransferase A (256 aa).

S-adenosyl-L-methionine-binding residues include His-12, Leu-14, Gly-39, Glu-60, Asp-83, and Asn-101.

The protein belongs to the class I-like SAM-binding methyltransferase superfamily. rRNA adenine N(6)-methyltransferase family. RsmA subfamily.

It is found in the cytoplasm. The catalysed reaction is adenosine(1518)/adenosine(1519) in 16S rRNA + 4 S-adenosyl-L-methionine = N(6)-dimethyladenosine(1518)/N(6)-dimethyladenosine(1519) in 16S rRNA + 4 S-adenosyl-L-homocysteine + 4 H(+). Specifically dimethylates two adjacent adenosines (A1518 and A1519) in the loop of a conserved hairpin near the 3'-end of 16S rRNA in the 30S particle. May play a critical role in biogenesis of 30S subunits. This Nitrosomonas eutropha (strain DSM 101675 / C91 / Nm57) protein is Ribosomal RNA small subunit methyltransferase A.